The chain runs to 444 residues: Probable glycine dehydrogenase (decarboxylating) subunit 1 (444 aa).

The protein belongs to the GcvP family. N-terminal subunit subfamily. The glycine cleavage system is composed of four proteins: P, T, L and H. In this organism, the P 'protein' is a heterodimer of two subunits.

It carries out the reaction N(6)-[(R)-lipoyl]-L-lysyl-[glycine-cleavage complex H protein] + glycine + H(+) = N(6)-[(R)-S(8)-aminomethyldihydrolipoyl]-L-lysyl-[glycine-cleavage complex H protein] + CO2. Its function is as follows. The glycine cleavage system catalyzes the degradation of glycine. The P protein binds the alpha-amino group of glycine through its pyridoxal phosphate cofactor; CO(2) is released and the remaining methylamine moiety is then transferred to the lipoamide cofactor of the H protein. In Prosthecochloris aestuarii (strain DSM 271 / SK 413), this protein is Probable glycine dehydrogenase (decarboxylating) subunit 1.